The primary structure comprises 367 residues: Ribosomal RNA large subunit methyltransferase M (367 aa).

S-adenosyl-L-methionine-binding positions include Ser-189, Cys-222 to Gly-225, Asp-241, Asp-261, and Asp-278. Catalysis depends on Lys-307, which acts as the Proton acceptor.

The protein belongs to the class I-like SAM-binding methyltransferase superfamily. RNA methyltransferase RlmE family. RlmM subfamily. In terms of assembly, monomer.

Its subcellular location is the cytoplasm. It carries out the reaction cytidine(2498) in 23S rRNA + S-adenosyl-L-methionine = 2'-O-methylcytidine(2498) in 23S rRNA + S-adenosyl-L-homocysteine + H(+). Functionally, catalyzes the 2'-O-methylation at nucleotide C2498 in 23S rRNA. The sequence is that of Ribosomal RNA large subunit methyltransferase M from Shewanella denitrificans (strain OS217 / ATCC BAA-1090 / DSM 15013).